The sequence spans 253 residues: Core protein VP8 (253 aa).

A propeptide spanning residues 1–31 is cleaved from the precursor; it reads MNDLLLENLFGEKALCAQVTRDQLLEIIAAG.

The protein belongs to the chordopoxvirinae VP8 family. Post-translationally, undergoes morphogenesis-associated proteolysis which cleaves the 28 kDa to a 25-kDa product. Proteolytic cleavage of major core proteins P4a (A10L), P4b (A3L), and VP8 (L4R), which occurs at a late stage of core formation, is required for production of infectious mature virions (MV).

The protein resides in the virion. Major core structural protein. This Vertebrata (FPV) protein is Core protein VP8.